The chain runs to 383 residues: Acetylornithine deacetylase (383 aa).

A Zn(2+)-binding site is contributed by His-80. Residue Asp-82 is part of the active site. Asp-112 contacts Zn(2+). Glu-144 is a catalytic residue. Zn(2+) is bound by residues Glu-145, Glu-169, and His-355.

This sequence belongs to the peptidase M20A family. ArgE subfamily. Homodimer. The cofactor is Zn(2+). Co(2+) is required as a cofactor. Glutathione serves as cofactor.

It localises to the cytoplasm. The catalysed reaction is N(2)-acetyl-L-ornithine + H2O = L-ornithine + acetate. It participates in amino-acid biosynthesis; L-arginine biosynthesis; L-ornithine from N(2)-acetyl-L-ornithine (linear): step 1/1. Catalyzes the hydrolysis of the amide bond of N(2)-acetylated L-amino acids. Cleaves the acetyl group from N-acetyl-L-ornithine to form L-ornithine, an intermediate in L-arginine biosynthesis pathway, and a branchpoint in the synthesis of polyamines. The chain is Acetylornithine deacetylase from Edwardsiella ictaluri (strain 93-146).